The primary structure comprises 79 residues: UPF0401 protein YkfF (79 aa).

The protein belongs to the UPF0401 family.

The chain is UPF0401 protein YkfF (ykfF) from Escherichia coli (strain K12).